The following is a 430-amino-acid chain: Adenylosuccinate synthetase (430 aa).

Residues 12–18 (GDEGKGK) and 40–42 (GHT) each bind GTP. Asp13 (proton acceptor) is an active-site residue. The Mg(2+) site is built by Asp13 and Gly40. IMP is bound by residues 13-16 (DEGK), 38-41 (NAGH), Thr128, Arg142, Gln223, Thr238, and Arg302. The active-site Proton donor is the His41. A substrate-binding site is contributed by 298–304 (TTTGRPR). GTP-binding positions include Arg304, 330-332 (SID), and 412-414 (SVG).

This sequence belongs to the adenylosuccinate synthetase family. In terms of assembly, homodimer. It depends on Mg(2+) as a cofactor.

The protein resides in the cytoplasm. It catalyses the reaction IMP + L-aspartate + GTP = N(6)-(1,2-dicarboxyethyl)-AMP + GDP + phosphate + 2 H(+). The protein operates within purine metabolism; AMP biosynthesis via de novo pathway; AMP from IMP: step 1/2. Plays an important role in the de novo pathway of purine nucleotide biosynthesis. Catalyzes the first committed step in the biosynthesis of AMP from IMP. In Streptococcus pyogenes serotype M5 (strain Manfredo), this protein is Adenylosuccinate synthetase.